The sequence spans 462 residues: Runt-related transcription factor 1 (462 aa).

The tract at residues 1–27 (MRIPVDTSTSRRFTPPSTTLSPGKMSE) is disordered. Low complexity predominate over residues 7-22 (TSTSRRFTPPSTTLSP). A Runt domain is found at 50–178 (NMVEVLSDHP…TVDGPREPRR (129 aa)). The tract at residues 80–84 (RCNKT) is interaction with DNA. Residues Asn112, Glu116, Arg139, and Val170 each contribute to the chloride site. Interaction with DNA regions lie at residues 135–143 (RFVGRSGRG) and 168–177 (ITVDGPREPR). Residues 399-462 (MMSGGERSPP…RLEEAVWRPY (64 aa)) form a disordered region. 2 stretches are compositionally biased toward polar residues: residues 415–433 (TNAS…NQSD) and 440–450 (SHSNSPTNMGS). Residues 453 to 462 (RLEEAVWRPY) show a composition bias toward basic and acidic residues.

As to quaternary structure, heterodimer with cbfb. runx1 binds DNA as a monomer and through the Runt domain. DNA-binding is increased by heterodimerization. As to expression, shows a complex and dynamic expression pattern. In stage 14-24 embryos, expressed in a subset of neuroblasts in the lateral stripe of the neural plate. In late neurula stages, expression begins in the olfactory placodes. Also expressed in structures that play a role in blood formation: at stage 14, expressed on the anterior ventral side of the embryo in the anterior endomesoderm. As the embryo elongates, expression shifts gradually to a V-shaped expression pattern in the presumptive ventral blood island.

It localises to the nucleus. Functionally, involved in primitive hematopoiesis in the embryo. This is Runt-related transcription factor 1 from Xenopus laevis (African clawed frog).